The chain runs to 392 residues: Formate-dependent phosphoribosylglycinamide formyltransferase (392 aa).

N(1)-(5-phospho-beta-D-ribosyl)glycinamide is bound by residues 12 to 13 (EL) and Glu-72. ATP is bound by residues Arg-104, Lys-145, 150-155 (SSGKGQ), 185-188 (EAFV), and Glu-193. The ATP-grasp domain maps to 109-300 (DLAARDLGLR…EFELHARAVL (192 aa)). Mg(2+) is bound by residues Glu-258 and Glu-270. N(1)-(5-phospho-beta-D-ribosyl)glycinamide contacts are provided by residues Asp-277, Lys-348, and 355–356 (RR).

It belongs to the PurK/PurT family. In terms of assembly, homodimer.

It carries out the reaction N(1)-(5-phospho-beta-D-ribosyl)glycinamide + formate + ATP = N(2)-formyl-N(1)-(5-phospho-beta-D-ribosyl)glycinamide + ADP + phosphate + H(+). The protein operates within purine metabolism; IMP biosynthesis via de novo pathway; N(2)-formyl-N(1)-(5-phospho-D-ribosyl)glycinamide from N(1)-(5-phospho-D-ribosyl)glycinamide (formate route): step 1/1. Involved in the de novo purine biosynthesis. Catalyzes the transfer of formate to 5-phospho-ribosyl-glycinamide (GAR), producing 5-phospho-ribosyl-N-formylglycinamide (FGAR). Formate is provided by PurU via hydrolysis of 10-formyl-tetrahydrofolate. This chain is Formate-dependent phosphoribosylglycinamide formyltransferase, found in Chlorobaculum tepidum (strain ATCC 49652 / DSM 12025 / NBRC 103806 / TLS) (Chlorobium tepidum).